The primary structure comprises 331 residues: DNA-directed RNA polymerase subunit alpha (331 aa).

Residues Met-1–Glu-233 are alpha N-terminal domain (alpha-NTD). Positions Ala-268 to Asp-331 are alpha C-terminal domain (alpha-CTD).

It belongs to the RNA polymerase alpha chain family. In plastids the minimal PEP RNA polymerase catalytic core is composed of four subunits: alpha, beta, beta', and beta''. When a (nuclear-encoded) sigma factor is associated with the core the holoenzyme is formed, which can initiate transcription.

It is found in the plastid. The protein resides in the chloroplast. The enzyme catalyses RNA(n) + a ribonucleoside 5'-triphosphate = RNA(n+1) + diphosphate. In terms of biological role, DNA-dependent RNA polymerase catalyzes the transcription of DNA into RNA using the four ribonucleoside triphosphates as substrates. This is DNA-directed RNA polymerase subunit alpha from Illicium oligandrum (Star anise).